The chain runs to 302 residues: Methionyl-tRNA formyltransferase (302 aa).

108–111 (SLLP) contributes to the (6S)-5,6,7,8-tetrahydrofolate binding site. Over residues 276–288 (REGKRPMEPEEFL) the composition is skewed to basic and acidic residues. The tract at residues 276–302 (REGKRPMEPEEFLRGFPLPEGSRAHTA) is disordered.

Belongs to the Fmt family.

The enzyme catalyses L-methionyl-tRNA(fMet) + (6R)-10-formyltetrahydrofolate = N-formyl-L-methionyl-tRNA(fMet) + (6S)-5,6,7,8-tetrahydrofolate + H(+). In terms of biological role, attaches a formyl group to the free amino group of methionyl-tRNA(fMet). The formyl group appears to play a dual role in the initiator identity of N-formylmethionyl-tRNA by promoting its recognition by IF2 and preventing the misappropriation of this tRNA by the elongation apparatus. The protein is Methionyl-tRNA formyltransferase of Cereibacter sphaeroides (strain ATCC 17029 / ATH 2.4.9) (Rhodobacter sphaeroides).